A 543-amino-acid polypeptide reads, in one-letter code: DM7 family protein GG19680 (543 aa).

Over residues 415-430 the composition is skewed to basic and acidic residues; that stretch reads GETQEMDEAHPTKEES. Residues 415 to 443 form a disordered region; sequence GETQEMDEAHPTKEESKSEEEGEVQSGSQ.

It belongs to the DM7 family.

The protein is DM7 family protein GG19680 of Drosophila erecta (Fruit fly).